The primary structure comprises 124 residues: Aspartate 1-decarboxylase (124 aa).

Serine 25 functions as the Schiff-base intermediate with substrate; via pyruvic acid in the catalytic mechanism. Serine 25 carries the pyruvic acid (Ser) modification. Threonine 57 provides a ligand contact to substrate. The Proton donor role is filled by tyrosine 58. 73–75 contacts substrate; it reads GAA.

The protein belongs to the PanD family. As to quaternary structure, heterooctamer of four alpha and four beta subunits. The cofactor is pyruvate. In terms of processing, is synthesized initially as an inactive proenzyme, which is activated by self-cleavage at a specific serine bond to produce a beta-subunit with a hydroxyl group at its C-terminus and an alpha-subunit with a pyruvoyl group at its N-terminus.

The protein localises to the cytoplasm. The catalysed reaction is L-aspartate + H(+) = beta-alanine + CO2. It participates in cofactor biosynthesis; (R)-pantothenate biosynthesis; beta-alanine from L-aspartate: step 1/1. In terms of biological role, catalyzes the pyruvoyl-dependent decarboxylation of aspartate to produce beta-alanine. The polypeptide is Aspartate 1-decarboxylase (Syntrophobacter fumaroxidans (strain DSM 10017 / MPOB)).